We begin with the raw amino-acid sequence, 148 residues long: F-box protein At3g55900 (148 aa).

Residues 9–59 (CRNLSELPQELLYKILGLLPTRNVVSTSLISHQRRSQFHWMERLKFRYPRL) enclose the F-box domain.

This chain is F-box protein At3g55900, found in Arabidopsis thaliana (Mouse-ear cress).